A 150-amino-acid chain; its full sequence is C-type natriuretic peptide (150 aa).

An N-terminal signal peptide occupies residues 1–31; that stretch reads MSISSSSSSSSSSSSCLLLISLMLLAASCQG. A propeptide spanning residues 32 to 127 is cleaved from the precursor; that stretch reads RPDLQHRNHK…RKMFRGRTKK (96 aa). Over residues 60-73 the composition is skewed to low complexity; sequence GAADGSSGEEAALS. The tract at residues 60-109 is disordered; it reads GAADGSSGEEAALSQRAPPSIRALHPRSGRLGLRDDLEAEPPAENKPRRR. A disulfide bridge connects residues cysteine 134 and cysteine 150.

This sequence belongs to the natriuretic peptide family. As to expression, expressed in brain, but not in atrium or ventricle.

It localises to the secreted. Hormone which plays a role in endochondral ossification through regulation of cartilaginous growth plate chondrocytes proliferation and differentiation. May also be vasoactive and natriuretic. This chain is C-type natriuretic peptide (cnp), found in Acipenser transmontanus (White sturgeon).